Reading from the N-terminus, the 79-residue chain is uncharacterized protein (79 aa).

This is an uncharacterized protein from Sulfolobus spindle-shape virus 1 (SSV1).